The chain runs to 604 residues: Cell division cycle protein CDT1 (604 aa).

It belongs to the Cdt1 family. In terms of assembly, associates with the MCM2-7 complex. Interacts with MCM2, ORC1, ORC2 and ORC6.

The protein localises to the cytoplasm. Its subcellular location is the nucleus. Functionally, DNA replication licensing factor, required for pre-replication complex assembly. Faithful duplication of the genetic material requires 'once per cell cycle' DNA replication initiation and elongation. Central to this control is the tightly regulated formation of prereplicative complexes (preRCs) at future origins of DNA replication. Required for the recruitment of the MCM2-7 helicase complex to the replication origins. The sequence is that of Cell division cycle protein CDT1 (TAH11) from Saccharomyces cerevisiae (strain ATCC 204508 / S288c) (Baker's yeast).